Consider the following 1176-residue polypeptide: MENNIQNQCVPYNCLSNPEEILLDGERISTGNSSIDISLSLVQLLVSNFVPGGGFLVGLLDFVWGIVGPSPWDAFLVQIEQLINERIAAYARSAAISNLEGLGNNFNIYVEAFKEWEADPDNPVTRTRVVDRFRILDGLLERDIPSFRIAGFEVPLLSVYAQAANLHLAILRDSSIFGARWGLTTINVNENYNRLIRHIDEYANHCADTYNRGLNNLPKSTYQDWITYNRLRRDLTLTVLDIAAFFPSYDNRRYPIQSVGQLTREIYTDPLITFNPQLQSVAQLPTFNVMESNAIRTPHLFDVLNNLTIFTDWFSVGRNFYWGGHRVISNRIGGGNITSPIYGREANQEPPRSFTFNGPVFRTLSNPTFRPLQQPWPAPPFNLRGVEGVEFSTPLNSFTYRGRGTVDSLTELPPEDNSVPPREGYSHRLCHATFVQRSGTPFLTTGPVFSWTHRSATDRNIIYPDVINQIPLVKAFNLTSGTSVVRGPGFTGGDIIRTNVNGSVLSMSLNFSNTTLQRYRVRVRYAASQTMVMSVTVGGSTTGNQGFPSTMSANGALTSQSFRFAEFPVGISASGSQGASISISNNVGRQMFHLDRIEFLPVTSTFEEEYDLERAQEAVNALFTSTNQLGLKTDVTDYHIDQVSNLVECLSDEFCLDEKRELSEKVKHAKRLSDERNLLQDRNFRSINGQLDRGWRGSTDITIQGGDDVFKENYVTLPGTFDECYPTYLYQKIDESKLKSYTRYELRGYIEDSQDLEIYLIRYNAKHEIVNVPGTGSLWPLSIENSIGPCGEPNRCAPHLEWNPNLDCSCRDGEKCAHHSHHFSLDIDVGCTDLNEDLGVWVIFKIKTQDGHARLGNLEFLEEKPLLGEALARVKRAEKKWRDKREKLEWETNIVYKEAKESVDALFVNSQYDRLQADTNIAMIHAADKRVHRIREAYLPELSVIPGVNAGIFEELEGRIFTAYSLYDARNVIKNGDFNNGLLCWNLKGHVDVEEQNNHRSVLVVPEWEAEVSQEVRVCPGRGYILRVTAYKEGYGEGCVTIHEIEDNTDELKFSNCVEEEVYPNNTVTCNDYTATQEEYGGAYTSRNHGYGKSYESNSSVQADYASVYEEKADTDGRRDNHCESNRGYGDYTPLPAGYVTKELEYFPETDKVWVEIGETEGTFIVDSVELLLMEE.

It belongs to the delta endotoxin family.

Functionally, promotes colloidosmotic lysis by binding to the midgut epithelial cells of insects. Toxic to Spodoptera exigua and Trichoplusia ni. This chain is Pesticidal crystal protein Cry1Cb (cry1Cb), found in Bacillus thuringiensis subsp. galleriae.